The following is a 115-amino-acid chain: Large ribosomal subunit protein bL19 (115 aa).

Belongs to the bacterial ribosomal protein bL19 family.

This protein is located at the 30S-50S ribosomal subunit interface and may play a role in the structure and function of the aminoacyl-tRNA binding site. The chain is Large ribosomal subunit protein bL19 from Edwardsiella ictaluri (strain 93-146).